We begin with the raw amino-acid sequence, 486 residues long: Serralysin (486 aa).

Zn(2+) is bound at residue His-187. Glu-188 is a catalytic residue. His-191 and His-197 together coordinate Zn(2+). Ca(2+) contacts are provided by Arg-266, Asp-269, Asp-298, Gly-300, Gly-301, Asp-303, Thr-340, and Glu-342. 2 Hemolysin-type calcium-binding repeats span residues 345-362 (IGGSGNDVLIGNDAANTL) and 363-380 (KGGAGDDIIYGGLGADNL).

It belongs to the peptidase M10B family. The cofactor is Zn(2+). Ca(2+) is required as a cofactor.

It localises to the secreted. It carries out the reaction Preferential cleavage of bonds with hydrophobic residues in P1'.. In Photorhabdus luminescens (Xenorhabdus luminescens), this protein is Serralysin (prtA1).